The sequence spans 496 residues: Flotillin-like protein 3 (496 aa).

A lipid anchor (S-palmitoyl cysteine) is attached at cysteine 37. Positions 301-328 (VVREAELQLEVERKNALRLTEKLKAEKL) form a coiled coil.

The protein belongs to the band 7/mec-2 family. Flotillin subfamily. May be palmitoylated.

Its subcellular location is the cell membrane. It localises to the membrane. The protein resides in the caveola. Functionally, may act as a scaffolding protein within caveolar membranes, functionally participating in formation of caveolae or caveolae-like vesicles. This is Flotillin-like protein 3 (FLOT3) from Oryza sativa subsp. japonica (Rice).